The primary structure comprises 115 residues: Large ribosomal subunit protein P2 (115 aa).

N-acetylmethionine is present on methionine 1. Residues serine 17 and serine 19 each carry the phosphoserine modification. Residue lysine 21 is modified to N6-acetyllysine; alternate. N6-succinyllysine; alternate is present on lysine 21. Residues 76-90 (APGSAAPAAGSAPAA) show a composition bias toward low complexity. A disordered region spans residues 76–115 (APGSAAPAAGSAPAAAEEKKDEKKEESEESDDDMGFGLFD). Phosphoserine occurs at positions 79 and 86. The segment covering 91-101 (AEEKKDEKKEE) has biased composition (basic and acidic residues). Phosphoserine occurs at positions 102 and 105.

It belongs to the eukaryotic ribosomal protein P1/P2 family. As to quaternary structure, heterodimer with RPLP1 at the lateral ribosomal stalk of the large ribosomal subunit.

Plays an important role in the elongation step of protein synthesis. The polypeptide is Large ribosomal subunit protein P2 (Rplp2) (Mus musculus (Mouse)).